We begin with the raw amino-acid sequence, 323 residues long: ATP synthase gamma chain (323 aa).

Positions 206–240 are insert; that stretch reads NPIVNLVGFGYKERGVKPINNRRATSDIVGESKSI.

This sequence belongs to the ATPase gamma chain family. As to quaternary structure, F-type ATPases have 2 components, CF(1) - the catalytic core - and CF(0) - the membrane proton channel. CF(1) has five subunits: alpha(3), beta(3), gamma(1), delta(1), epsilon(1). CF(0) has three main subunits: a, b and c.

The protein localises to the cell inner membrane. Its function is as follows. Produces ATP from ADP in the presence of a proton gradient across the membrane. The gamma chain is believed to be important in regulating ATPase activity and the flow of protons through the CF(0) complex. This is ATP synthase gamma chain from Rickettsia conorii (strain ATCC VR-613 / Malish 7).